The primary structure comprises 648 residues: Centrosomal protein of 63 kDa-B (648 aa).

2 coiled-coil regions span residues 19–188 and 222–555; these read DSCE…QSHN and EEEL…DAAS. Phosphoserine; by atm and atr is present on S559. Residues 611-644 are a coiled coil; sequence FLQEEEQRSHELLQRLNAHIEELKQESQRTVEHF.

Belongs to the CEP63 family. Post-translationally, phosphorylation at Ser-559 by atm and atr promotes its delocalization from the centrosome and impairs its ability to promote centrosome dependent spindle assembly.

The protein localises to the cytoplasm. Its subcellular location is the cytoskeleton. It is found in the microtubule organizing center. It localises to the centrosome. The protein resides in the centriole. In terms of biological role, required for normal spindle assembly. Plays a key role in mother-centriole-dependent centriole duplication. Plays a role in DNA damage response. Following DNA damage, such as double-strand breaks (DSBs), is removed from centrosomes; this leads to the inactivation of spindle assembly and delay in mitotic progression. This chain is Centrosomal protein of 63 kDa-B (cep63-b), found in Xenopus laevis (African clawed frog).